The chain runs to 343 residues: KRR1 small subunit processome component homolog (343 aa).

The KH domain occupies 126–194 (DIIKIGNLVH…VRDIVLETMN (69 aa)). The span at 230–246 (KNKNISKRKQPKNKKPK) shows a compositional bias: basic residues. Residues 230 to 343 (KNKNISKRKQ…LMKANKKNRS (114 aa)) are disordered. Basic and acidic residues-rich tracts occupy residues 272 to 303 (LNKE…RNKD) and 318 to 331 (RPAE…DALK). The stretch at 272 to 341 (LNKEQKQAKK…AKLMKANKKN (70 aa)) forms a coiled coil. The segment covering 333 to 343 (KLMKANKKNRS) has biased composition (basic residues).

Belongs to the KRR1 family. Monomer. Component of the ribosomal small subunit (SSU) processome.

It localises to the nucleus. Its subcellular location is the nucleolus. Required for 40S ribosome biogenesis. Involved in nucleolar processing of pre-18S ribosomal RNA and ribosome assembly. Binds to RNA. Required for female germline development, cell viability during eye development and for survival of dividing cells and epithelial cells during early wing disk development. This is KRR1 small subunit processome component homolog from Drosophila virilis (Fruit fly).